We begin with the raw amino-acid sequence, 90 residues long: Neuropeptide-like 3 (90 aa).

The N-terminal stretch at 1–16 is a signal peptide; it reads MFKLCVFVALLSLAAA. Propeptides lie at residues 17-54 and 67-79; these read APAP…LAPQ and AITQ…LLIK. I89 carries the post-translational modification Isoleucine amide.

The protein localises to the secreted. This chain is Neuropeptide-like 3 (Nplp3), found in Drosophila melanogaster (Fruit fly).